The following is a 305-amino-acid chain: ATP-dependent Clp protease proteolytic subunit-related protein 4, chloroplastic (305 aa).

A chloroplast-targeting transit peptide spans 1–68 (MEVAAATATS…SSDLCGAKLR (68 aa)).

Belongs to the peptidase S14 family. In terms of assembly, component of the chloroplastic Clp protease core complex which consist of at least 16 proteins: CLPP4 (3 copies), CLPP5 (3 copies), CLPR4 (2 copies), ClpP1 (1 copy), CLPP6 (1 copy), CLPR2 (1 copy), CLPT1 (1 copy), CLPT2 (1 copy) and 3 copies of CLPP3 and/or CLPR1 and/or CLPR3. The core complex is organized in two heptameric rings, one containing CLPP3,4,5,6 in a 1:2:3:1 ratio and the other CLPP1 and CLPR1,2,3,4 in a 3:1:1:1:1 ratio.

The protein localises to the plastid. It is found in the chloroplast. Functionally, involved in plastid protein homeostasis. The sequence is that of ATP-dependent Clp protease proteolytic subunit-related protein 4, chloroplastic from Arabidopsis thaliana (Mouse-ear cress).